A 161-amino-acid chain; its full sequence is Troponin C, slow skeletal and cardiac muscles (161 aa).

Met1 is subject to N-acetylmethionine. 4 EF-hand domains span residues 16–51, 52–87, 92–127, and 128–161; these read QKNEFKAAFDIFVLGAEDGCISTKELGKVMRMLGQN, PTPEELQEMIDEVDEDGSGTVDFDEFLVMMVRCMKD, KSEEELSDLFRMFDKNADGYIDLDELKIMLQATGET, and ITEDDIEELMKDGDKNNDGRIDYDEFLEFMKGVE. Asp65, Asp67, Ser69, Thr71, and Glu76 together coordinate Ca(2+). Ser98 bears the Phosphoserine mark. Positions 105, 107, 109, 111, 116, 141, 143, 145, 147, and 152 each coordinate Ca(2+).

The protein belongs to the troponin C family.

Troponin is the central regulatory protein of striated muscle contraction. Tn consists of three components: Tn-I which is the inhibitor of actomyosin ATPase, Tn-T which contains the binding site for tropomyosin and Tn-C. The binding of calcium to Tn-C abolishes the inhibitory action of Tn on actin filaments. This Homo sapiens (Human) protein is Troponin C, slow skeletal and cardiac muscles (TNNC1).